The following is a 466-amino-acid chain: Chromosomal replication initiator protein DnaA (466 aa).

Positions 1–86 are domain I, interacts with DnaA modulators; that stretch reads MSLSLWQQCL…EVGTKPVTQT (86 aa). The tract at residues 86 to 129 is domain II; that stretch reads TLKTPVHNVVAPTQTTTAQPQRVAPAARSGWDNVPAPAEPTYRS. The domain III, AAA+ region stretch occupies residues 130-346; that stretch reads NVNVKHTFDN…GALNRVIANA (217 aa). Residues G174, G176, K177, and T178 each contribute to the ATP site. Residues 347-466 are domain IV, binds dsDNA; sequence NFTGRAITID…FSNLIRTLSS (120 aa).

This sequence belongs to the DnaA family. In terms of assembly, oligomerizes as a right-handed, spiral filament on DNA at oriC.

Its subcellular location is the cytoplasm. Its function is as follows. Plays an essential role in the initiation and regulation of chromosomal replication. ATP-DnaA binds to the origin of replication (oriC) to initiate formation of the DNA replication initiation complex once per cell cycle. Binds the DnaA box (a 9 base pair repeat at the origin) and separates the double-stranded (ds)DNA. Forms a right-handed helical filament on oriC DNA; dsDNA binds to the exterior of the filament while single-stranded (ss)DNA is stabiized in the filament's interior. The ATP-DnaA-oriC complex binds and stabilizes one strand of the AT-rich DNA unwinding element (DUE), permitting loading of DNA polymerase. After initiation quickly degrades to an ADP-DnaA complex that is not apt for DNA replication. Binds acidic phospholipids. This chain is Chromosomal replication initiator protein DnaA, found in Salmonella dublin (strain CT_02021853).